Consider the following 577-residue polypeptide: Arginine--tRNA ligase (577 aa).

Positions 122 to 132 match the 'HIGH' region motif; the sequence is PNVAKEMHVGH.

The protein belongs to the class-I aminoacyl-tRNA synthetase family. As to quaternary structure, monomer.

It is found in the cytoplasm. The enzyme catalyses tRNA(Arg) + L-arginine + ATP = L-arginyl-tRNA(Arg) + AMP + diphosphate. This Vibrio campbellii (strain ATCC BAA-1116) protein is Arginine--tRNA ligase.